A 142-amino-acid chain; its full sequence is Negative cofactor 2 complex subunit alpha (142 aa).

Polar residues predominate over residues 1–11 (MADQVPVTTQL). Residues 1–43 (MADQVPVTTQLPPIKPEHEVPLDAGGSPVGNMGTNSNNNNELG) form a disordered region. Phosphoserine is present on Ser-27. Residues 29–137 (VGNMGTNSNN…LCVEEGQTQP (109 aa)) form the Histone-fold domain. Ser-141 carries the post-translational modification Phosphoserine.

The protein belongs to the NC2 alpha/DRAP1 family. In terms of assembly, component of the NC2 (negative cofactor 2) complex composed of BUR6 and NCB2. The NC2 complex associates with SPT15/TBP. Interacts with SPT15/TBP.

Its subcellular location is the nucleus. Functionally, component of the NC2 complex which represses RNA polymerase II transcription through binding to SPT15/TBP and thereby inhibiting the assembly of the preinitiation complex. The NC2 complex may also mediate transcriptional activation from TATA-driven promoters through association with SPT15/TBP. This is Negative cofactor 2 complex subunit alpha (BUR6) from Saccharomyces cerevisiae (strain ATCC 204508 / S288c) (Baker's yeast).